We begin with the raw amino-acid sequence, 234 residues long: tRNA1(Val) (adenine(37)-N6)-methyltransferase (234 aa).

The protein belongs to the methyltransferase superfamily. tRNA (adenine-N(6)-)-methyltransferase family.

It localises to the cytoplasm. It carries out the reaction adenosine(37) in tRNA1(Val) + S-adenosyl-L-methionine = N(6)-methyladenosine(37) in tRNA1(Val) + S-adenosyl-L-homocysteine + H(+). Specifically methylates the adenine in position 37 of tRNA(1)(Val) (anticodon cmo5UAC). The sequence is that of tRNA1(Val) (adenine(37)-N6)-methyltransferase from Aliivibrio salmonicida (strain LFI1238) (Vibrio salmonicida (strain LFI1238)).